We begin with the raw amino-acid sequence, 424 residues long: Dihydroorotase-like protein (424 aa).

The protein belongs to the metallo-dependent hydrolases superfamily. DHOase family. PyrC' subfamily. Heterododecamer of 6 active PyrB subunits and 6 non-catalytic PyrC' subunits.

In terms of biological role, non-functional DHOase. In Pseudomonas putida (Arthrobacter siderocapsulatus), this protein is Dihydroorotase-like protein.